The primary structure comprises 438 residues: Mannose-1-phosphate guanylyltransferase regulatory subunit alpha (438 aa).

The tract at residues 2–260 (LKAVILIGGP…PNWWSQLKTA (259 aa)) is substrate-binding domain. 2 residues coordinate GDP-alpha-D-mannose: Glu87 and Gln256. The interval 282–438 (LANVGIKRGE…SRSFKNEIIL (157 aa)) is hexapeptide repeat domain. Positions 373 to 402 (TPSDPDPNKPFAKMENPPLFNNEGKLNPSI) are C-loop.

Belongs to the transferase hexapeptide repeat family. Component of the GMPPA-GMPPB mannose-1-phosphate guanylyltransferase complex composed of 4 GMPPA subunits and 8 GMPPB subunits; the complex is organized into three layers, a central layer made up of 2 GMPPA dimers sandwiched between two layers each made up of 2 GMPPB dimers.

Regulatory subunit of the GMPPA-GMPPB mannose-1-phosphate guanylyltransferase complex; reduces the catalytic activity of GMPPB when part of the complex. Mediates allosteric feedback inhibition of GMPPB catalytic activity upon binding GDP-alpha-D-mannose. Together with GMPPB regulates GDP-alpha-D-mannose levels. The protein is Mannose-1-phosphate guanylyltransferase regulatory subunit alpha of Drosophila melanogaster (Fruit fly).